A 147-amino-acid polypeptide reads, in one-letter code: MLTLTQLVTPNPDVAITLTLFLTAEERCRSRHRFETEDGQVVFLRLPRGTLLQDGDILQDETNGNLIRIAAKPEPVLTAVAQTQLLLMRAAYHLGNRHVPVEITPTYLRLSPDTVLRTMLEHMGLEITAEILPFQPELGAYGHHHPH.

This sequence belongs to the UreE family.

It localises to the cytoplasm. Functionally, involved in urease metallocenter assembly. Binds nickel. Probably functions as a nickel donor during metallocenter assembly. The polypeptide is Urease accessory protein UreE (Nostoc sp. (strain PCC 7120 / SAG 25.82 / UTEX 2576)).